Here is a 426-residue protein sequence, read N- to C-terminus: Putative two-component response regulator ARR20 (426 aa).

One can recognise a Response regulatory domain in the interval 40 to 155; that stretch reads SNRVLLVGAD…VIAVLWRHVY (116 aa). At Asp91 the chain carries 4-aspartylphosphate. The interval 161–216 is disordered; that stretch reads KSGLDKPGESGTVESDPDEYDDLEQDNLYESNEEGSKNTCDHKEEKSPTKKPRMQW. Residues 175 to 193 are compositionally biased toward acidic residues; that stretch reads SDPDEYDDLEQDNLYESNE. A compositionally biased stretch (basic and acidic residues) spans 194 to 208; sequence EGSKNTCDHKEEKSP. The short motif at 210 to 213 is the Nuclear localization signal element; the sequence is KKPR. The segment at residues 213-268 is a DNA-binding region (myb-like GARP); the sequence is RMQWTPELHHKFEVAVEKMGSLEKAFPKTILKYMQEELNVQGLTRNNVASHLQKYR.

Belongs to the ARR family. Type-B subfamily. As to quaternary structure, binds the target DNA as a monomer. Two-component system major event consists of a His-to-Asp phosphorelay between a sensor histidine kinase (HK) and a response regulator (RR). In plants, the His-to-Asp phosphorelay involves an additional intermediate named Histidine-containing phosphotransfer protein (HPt). This multistep phosphorelay consists of a His-Asp-His-Asp sequential transfer of a phosphate group between first a His and an Asp of the HK protein, followed by the transfer to a conserved His of the HPt protein and finally the transfer to an Asp in the receiver domain of the RR protein. As to expression, predominantly expressed in mature pistil tip. Also detected in the shoot apical meristem as well as vascular tissue and hydathodes of the leaves.

Its subcellular location is the nucleus. Putative transcriptional activator that binds specifically to the DNA sequence 5'-[AG]GATT-3'. Functions as a response regulator involved in His-to-Asp phosphorelay signal transduction system. Phosphorylation of the Asp residue in the receiver domain activates the ability of the protein to promote the transcription of target genes. Could directly activate some type-A response regulators in response to cytokinins. The protein is Putative two-component response regulator ARR20 (ARR20) of Arabidopsis thaliana (Mouse-ear cress).